We begin with the raw amino-acid sequence, 412 residues long: 5,5'-dehydrodivanillate O-demethylase ferredoxin reductase subunit (412 aa).

FAD contacts are provided by Ala14, Lys49, Val82, Arg130, Asp279, and Val298.

Belongs to the FAD-dependent oxidoreductase family. As to quaternary structure, monomer. The three-component monooxygenase is composed of an oxygenase (LigXa), a ferredoxin (LigXc) and a ferredoxin reductase (LigXd). FAD is required as a cofactor.

It catalyses the reaction 5,5'-dehydrodivanillate + NADH + O2 + H(+) = 2,2',3-trihydroxy-3'-methoxy-5,5'-dicarboxybiphenyl + formaldehyde + NAD(+) + H2O. Involved in the catabolism of 5,5'-dehydrodivanillate (DDVA), an intermediate in the biodegradation of lignin. Part of a three-component monooxygenase that catalyzes the O-demethylation of DDVA, leading to the formation of 2,2',3-trihydroxy-3'-methoxy-5,5'-dicarboxybiphenyl (OH-DDVA). LigXd probably transfers the electrons from NADH to LigXc. This Sphingobium sp. (strain NBRC 103272 / SYK-6) protein is 5,5'-dehydrodivanillate O-demethylase ferredoxin reductase subunit.